Consider the following 200-residue polypeptide: Recombination protein RecR (200 aa).

Residues 57 to 72 (CRQCRTLTEQELCPQC) form a C4-type zinc finger. Residues 80–175 (TQLCVVEGPT…AATRIAHGVP (96 aa)) form the Toprim domain.

Belongs to the RecR family.

Functionally, may play a role in DNA repair. It seems to be involved in an RecBC-independent recombinational process of DNA repair. It may act with RecF and RecO. This is Recombination protein RecR from Pseudomonas putida (strain GB-1).